Here is a 293-residue protein sequence, read N- to C-terminus: Phosphoribosylaminoimidazole-succinocarboxamide synthase (293 aa).

It belongs to the SAICAR synthetase family.

It carries out the reaction 5-amino-1-(5-phospho-D-ribosyl)imidazole-4-carboxylate + L-aspartate + ATP = (2S)-2-[5-amino-1-(5-phospho-beta-D-ribosyl)imidazole-4-carboxamido]succinate + ADP + phosphate + 2 H(+). It participates in purine metabolism; IMP biosynthesis via de novo pathway; 5-amino-1-(5-phospho-D-ribosyl)imidazole-4-carboxamide from 5-amino-1-(5-phospho-D-ribosyl)imidazole-4-carboxylate: step 1/2. This chain is Phosphoribosylaminoimidazole-succinocarboxamide synthase, found in Desulfosudis oleivorans (strain DSM 6200 / JCM 39069 / Hxd3) (Desulfococcus oleovorans).